The following is a 200-amino-acid chain: N-(5'-phosphoribosyl)anthranilate isomerase (200 aa).

It belongs to the TrpF family.

It catalyses the reaction N-(5-phospho-beta-D-ribosyl)anthranilate = 1-(2-carboxyphenylamino)-1-deoxy-D-ribulose 5-phosphate. It functions in the pathway amino-acid biosynthesis; L-tryptophan biosynthesis; L-tryptophan from chorismate: step 3/5. The polypeptide is N-(5'-phosphoribosyl)anthranilate isomerase (Endomicrobium trichonymphae).